We begin with the raw amino-acid sequence, 312 residues long: Src-like-adapter (312 aa).

The tract at residues 1-33 is disordered; the sequence is MLCRLPGPSTSRGEKEMGNSMKSTPAPLERPLS. Residues 38-98 form the SH3 domain; that stretch reads LESDFLAVLN…PGICVARVYH (61 aa). Residues 100-191 enclose the SH2 domain; sequence WLFEGLGRDK…GLCCVLTTPC (92 aa). The segment at 206-312 is SLA C-terminal; it reads CTSPGSPVTL…TQKTKALTAT (107 aa). A Phosphoserine modification is found at Ser-274.

As to quaternary structure, homodimer. Interacts with phosphorylated CBL, SYK and LAT. Homodimerization and interaction with phosphorylated CBL occurs via its C-terminal domain. Interacts with PDGFRB and EPHA2. Interacts with phosphorylated proteins ZAP70; CD3Z; VAV1 and LCP2 via its SH2 domain. Post-translationally, phosphorylated.

The protein resides in the cytoplasm. Its subcellular location is the endosome. In terms of biological role, adapter protein, which negatively regulates T-cell receptor (TCR) signaling. Inhibits T-cell antigen-receptor induced activation of nuclear factor of activated T-cells. Involved in the negative regulation of positive selection and mitosis of T-cells. May act by linking signaling proteins such as ZAP70 with CBL, leading to a CBL dependent degradation of signaling proteins. This Rattus norvegicus (Rat) protein is Src-like-adapter (Sla).